Reading from the N-terminus, the 487-residue chain is GTPase Der (487 aa).

EngA-type G domains lie at 3–167 (FTLA…EGFA) and 203–378 (LQIA…DIWN). GTP contacts are provided by residues 9 to 16 (GRPNVGKS), 56 to 60 (DTAGL), 119 to 122 (NKAE), 209 to 216 (GRPNAGKS), 256 to 260 (DTAGM), and 321 to 324 (NKWD). One can recognise a KH-like domain in the interval 379–463 (RRITTARLNS…PIRLTMRGQG (85 aa)). A disordered region spans residues 459–487 (MRGQGDKNPFKERKFRTPSRLRKHLGKKG). Residues 471–487 (RKFRTPSRLRKHLGKKG) are compositionally biased toward basic residues.

It belongs to the TRAFAC class TrmE-Era-EngA-EngB-Septin-like GTPase superfamily. EngA (Der) GTPase family. As to quaternary structure, associates with the 50S ribosomal subunit.

GTPase that plays an essential role in the late steps of ribosome biogenesis. In Cereibacter sphaeroides (strain ATCC 17025 / ATH 2.4.3) (Rhodobacter sphaeroides), this protein is GTPase Der.